Consider the following 611-residue polypeptide: Chaperone protein DnaK (611 aa).

Thr173 carries the post-translational modification Phosphothreonine; by autocatalysis. Residues 579–592 (AAGQAEGAQGAQDA) are compositionally biased toward low complexity. The tract at residues 579–611 (AAGQAEGAQGAQDAGAKKDNVVDAEFEEVKEDK) is disordered. Positions 600-611 (VDAEFEEVKEDK) are enriched in acidic residues.

This sequence belongs to the heat shock protein 70 family.

Functionally, acts as a chaperone. This is Chaperone protein DnaK from Bacillus mycoides (strain KBAB4) (Bacillus weihenstephanensis).